A 346-amino-acid polypeptide reads, in one-letter code: NADH-ubiquinone oxidoreductase chain 2 (346 aa).

10 consecutive transmembrane segments (helical) span residues 25–45 (HWVLAWTGLEINTLAIIPLIS), 60–80 (FLTQAAASALVLFSSMTNAWA), 95–115 (CLLLTAAIAIKLGLVPFHFWF), 124–144 (LMTALLLSTLMKFPPLTLLLM), 149–169 (LNPALLTAMALASTALGGWMG), 178–195 (ILAFSSISHLGWIAIILV), 200–219 (LALLTFYLYTIMTSAVFMAL), 247–267 (VLLSLAGLPPLTGFMPKWLII), 274–294 (EMTPAAMAIAMLSLLSLFFYL), and 326–346 (AILASLSILLLPLSPMVHAIV).

Belongs to the complex I subunit 2 family.

The protein resides in the mitochondrion inner membrane. The catalysed reaction is a ubiquinone + NADH + 5 H(+)(in) = a ubiquinol + NAD(+) + 4 H(+)(out). Core subunit of the mitochondrial membrane respiratory chain NADH dehydrogenase (Complex I) that is believed to belong to the minimal assembly required for catalysis. Complex I functions in the transfer of electrons from NADH to the respiratory chain. The immediate electron acceptor for the enzyme is believed to be ubiquinone. This is NADH-ubiquinone oxidoreductase chain 2 (MT-ND2) from Anas capensis (Cape teal).